A 122-amino-acid polypeptide reads, in one-letter code: Urease subunit beta (122 aa).

The disordered stretch occupies residues 92-122 (GLRPEYAGELDGRGHEPTAPNYGEKGQGHFE).

It belongs to the urease beta subunit family. In terms of assembly, heterotrimer of UreA (gamma), UreB (beta) and UreC (alpha) subunits. Three heterotrimers associate to form the active enzyme.

It is found in the cytoplasm. It carries out the reaction urea + 2 H2O + H(+) = hydrogencarbonate + 2 NH4(+). The protein operates within nitrogen metabolism; urea degradation; CO(2) and NH(3) from urea (urease route): step 1/1. The protein is Urease subunit beta of Saccharopolyspora erythraea (strain ATCC 11635 / DSM 40517 / JCM 4748 / NBRC 13426 / NCIMB 8594 / NRRL 2338).